Here is an 87-residue protein sequence, read N- to C-terminus: Beta-toxin Ct17 (87 aa).

Positions 1–19 are cleaved as a signal peptide; the sequence is MNSLLMITACLVLIGTVWA. Residues 20–85 form the LCN-type CS-alpha/beta domain; the sequence is KKDGYLVDKT…TWPLPNKRCG (66 aa). 4 disulfides stabilise this stretch: cysteine 31-cysteine 84, cysteine 35-cysteine 60, cysteine 44-cysteine 65, and cysteine 48-cysteine 67. Cysteine 84 carries the cysteine amide modification.

Belongs to the long (4 C-C) scorpion toxin superfamily. Sodium channel inhibitor family. Beta subfamily. As to expression, expressed by the venom gland.

The protein resides in the secreted. Functionally, beta toxins bind voltage-independently at site-4 of sodium channels (Nav) and shift the voltage of activation toward more negative potentials thereby affecting sodium channel activation and promoting spontaneous and repetitive firing. Is possibly lethal to mice, freshwater shrimp and crickets. This Centruroides tecomanus (Scorpion) protein is Beta-toxin Ct17.